The sequence spans 709 residues: MEKTFNLTRREDGIAILMMDVPGETMNTLKAEFGPEISEILSEIKRDSSIRGLVLISGKKDSFVAGADISMLDACQTAGDAKALSQQGHVVFNELEALNIPVVAAIHGACLGGGLELALACHQRVCSDDGKTMLGVPEVQLGLLPGGGGTQRLPRLVGITTALDMMLTGKQIRPKQALKMGLVNDVVPQTILLQTAVEMALAGKRTAKPVKKSLVNQLLEGTGFGRNIIFDQAAKQVVKKTQGNYPAPAKIIDCVRQGMAKGMQKGLEVEASHFAELVVSKESEALRSIFFATTEMKKETGAEGATPRKVKKAVILGGGLMGGGIASVTTTKAKIPARVKDINEKGLSNALSYAYKLLDKGVKRRHMTPAVRDNLMALMTTTTEYKGVKDADIVVEAVFEDLALKHQMVKDIERECGEHTIFASNTSSLPIGQIAQAASRPENVIGLHYFSPVEKMPLVEVIAHAKTSPETIATTVAFARKQGKTPIVVQDGAGFYVNRILALYMNEAAQLLLEGQSIEHLDKALVKFGFPVGPITLLDEVGIDVGAKIAPILEKELGERFKAPAAFDKLLSDDRKGRKNGKGFYQYAAGNKASSKKKAVDESVYAVLGIKPGMDKDLSAVAERCVVQMLNEAVRCLDDGIIASPRDGDIGAIFGIGFPPFLGGPFHYIDTLGADNLVNILERYQAQYGDRFEPCPRLKAMAAEKARFF.

Residues 1-188 form an enoyl-CoA hydratase region; that stretch reads MEKTFNLTRR…KMGLVNDVVP (188 aa). The interval 308–709 is 3-hydroxyacyl-CoA dehydrogenase; that stretch reads RKVKKAVILG…AMAAEKARFF (402 aa).

The protein in the N-terminal section; belongs to the enoyl-CoA hydratase/isomerase family. This sequence in the central section; belongs to the 3-hydroxyacyl-CoA dehydrogenase family. Heterotetramer of two alpha chains (FadJ) and two beta chains (FadI).

It localises to the cytoplasm. The catalysed reaction is a (3S)-3-hydroxyacyl-CoA = a (2E)-enoyl-CoA + H2O. The enzyme catalyses a 4-saturated-(3S)-3-hydroxyacyl-CoA = a (3E)-enoyl-CoA + H2O. It catalyses the reaction a (3S)-3-hydroxyacyl-CoA + NAD(+) = a 3-oxoacyl-CoA + NADH + H(+). It carries out the reaction (3S)-3-hydroxybutanoyl-CoA = (3R)-3-hydroxybutanoyl-CoA. The protein operates within lipid metabolism; fatty acid beta-oxidation. Its function is as follows. Catalyzes the formation of a hydroxyacyl-CoA by addition of water on enoyl-CoA. Also exhibits 3-hydroxyacyl-CoA epimerase and 3-hydroxyacyl-CoA dehydrogenase activities. The sequence is that of Fatty acid oxidation complex subunit alpha from Shewanella sp. (strain ANA-3).